The following is a 286-amino-acid chain: MSFHLKQVTRRFGKHTAVDSVDVEIPQGQMVGVIGRSGAGKSTLLRMINRLVDPSSGSIHFNDTEVSSLKGAALRAWQRDCAMIFQQFNLVPRLDVLTNVMLGRLNHRSTALSLFNIFSHEERLMAIAALERLGIEHVAMQAAGTLSGGQQQRVAIARALMQSPKMVLADEPIASLDPLNAKIVMDALRDINEREGITVITNLHTLDTARNYCERIIGMSQGRVVFDGTPAELTAAAVTEIYGTDSQGSGIDETMTSTSINIPGAQLAARPVQQSAGPEPLALAGL.

Residues 3-246 enclose the ABC transporter domain; that stretch reads FHLKQVTRRF…AVTEIYGTDS (244 aa). An ATP-binding site is contributed by 35–42; sequence GRSGAGKS.

Belongs to the ABC transporter superfamily. Phosphonates importer (TC 3.A.1.9.1) family. In terms of assembly, the complex is composed of two ATP-binding proteins (PhnC), two transmembrane proteins (PhnE) and a solute-binding protein (PhnD).

Its subcellular location is the cell inner membrane. The catalysed reaction is phosphonate(out) + ATP + H2O = phosphonate(in) + ADP + phosphate + H(+). Functionally, part of the ABC transporter complex PhnCDE involved in phosphonates import. Responsible for energy coupling to the transport system. The sequence is that of Phosphonates import ATP-binding protein PhnC from Agrobacterium fabrum (strain C58 / ATCC 33970) (Agrobacterium tumefaciens (strain C58)).